The chain runs to 194 residues: ECF RNA polymerase sigma factor SigX (194 aa).

Residues 32-45 (DLLQEVYIRVLNSY) carry the Polymerase core binding motif. The H-T-H motif DNA-binding region spans 136 to 155 (IQETAKALRFSESKVKTTQH).

The protein belongs to the sigma-70 factor family. ECF subfamily. As to quaternary structure, interacts transiently with the RNAP core.

It is found in the cell membrane. In terms of biological role, sigma factors are initiation factors that promote the attachment of RNA polymerase (RNAP) to specific initiation sites and are then released. May be involved in the regulation of iron metabolism. Associates with RNAP core during early growth phases, association decreases as cells age. This chain is ECF RNA polymerase sigma factor SigX (sigX), found in Bacillus subtilis (strain 168).